The primary structure comprises 295 residues: 4-hydroxy-tetrahydrodipicolinate synthase (295 aa).

Thr46 lines the pyruvate pocket. The active-site Proton donor/acceptor is the Tyr135. Lys164 (schiff-base intermediate with substrate) is an active-site residue. Residue Ile205 participates in pyruvate binding.

This sequence belongs to the DapA family. In terms of assembly, homotetramer; dimer of dimers.

It is found in the cytoplasm. It catalyses the reaction L-aspartate 4-semialdehyde + pyruvate = (2S,4S)-4-hydroxy-2,3,4,5-tetrahydrodipicolinate + H2O + H(+). It functions in the pathway amino-acid biosynthesis; L-lysine biosynthesis via DAP pathway; (S)-tetrahydrodipicolinate from L-aspartate: step 3/4. Catalyzes the condensation of (S)-aspartate-beta-semialdehyde [(S)-ASA] and pyruvate to 4-hydroxy-tetrahydrodipicolinate (HTPA). The polypeptide is 4-hydroxy-tetrahydrodipicolinate synthase (Aliarcobacter butzleri (strain RM4018) (Arcobacter butzleri)).